The sequence spans 91 residues: Auxin-responsive protein SAUR20 (91 aa).

Belongs to the ARG7 family.

Its subcellular location is the cell membrane. Functionally, functions as a positive effector of cell expansion through modulation of auxin transport. The chain is Auxin-responsive protein SAUR20 from Arabidopsis thaliana (Mouse-ear cress).